Reading from the N-terminus, the 160-residue chain is Protein-export protein SecB (160 aa).

This sequence belongs to the SecB family. Homotetramer, a dimer of dimers. One homotetramer interacts with 1 SecA dimer.

It is found in the cytoplasm. In terms of biological role, one of the proteins required for the normal export of preproteins out of the cell cytoplasm. It is a molecular chaperone that binds to a subset of precursor proteins, maintaining them in a translocation-competent state. It also specifically binds to its receptor SecA. In Rhizobium etli (strain ATCC 51251 / DSM 11541 / JCM 21823 / NBRC 15573 / CFN 42), this protein is Protein-export protein SecB.